The following is a 431-amino-acid chain: Pheromone alpha factor receptor (431 aa).

At 1–49 the chain is on the extracellular side; it reads MSDAAPSLSNLFYDPTYNPGQSTINYTSIYGNGSTITFDELQGLVNSTV. N-linked (GlcNAc...) asparagine glycosylation is found at Asn25 and Asn32. Residues 50 to 72 form a helical membrane-spanning segment; that stretch reads TQAIMFGVRCGAAALTLIVMWMT. Residues 53–61 carry the Glycine zipper motif motif; it reads IMFGVRCGA. Residues 73–78 are Cytoplasmic-facing; sequence SRSRKT. A helical membrane pass occupies residues 79–102; sequence PIFIINQVSLFLIILHSALYFKYL. The Extracellular portion of the chain corresponds to 103–132; sequence LSNYSSVTYALTGFPQFISRGDVHVYGATN. Residues 133–156 traverse the membrane as a helical segment; it reads IIQVLLVASIETSLVFQIKVIFTG. Topologically, residues 157–163 are cytoplasmic; it reads DNFKRIG. The helical transmembrane segment at 164 to 188 threads the bilayer; sequence LMLTSISFTLGIATVTMYFVSAVKG. Residues 189 to 205 lie on the Extracellular side of the membrane; it reads MIVTYNDVSATQDKYFN. Residues 206–230 traverse the membrane as a helical segment; that stretch reads ASTILLASSINFMSFVLVVKLILAI. Residues 231–241 lie on the Cytoplasmic side of the membrane; it reads RSRRFLGLKQF. The helical transmembrane segment at 242–266 threads the bilayer; the sequence is DSFHILLIMSCQSLLVPSIIFILAY. Over 267-275 the chain is Extracellular; it reads SLKPNQGTD. The helical transmembrane segment at 276 to 299 threads the bilayer; sequence VLTTVATLLAVLSLPLSSMWATAA. Over 300-431 the chain is Cytoplasmic; the sequence is NNASKTNTIT…KFWTEDNNNL (132 aa). Phosphoserine is present on residues Ser310 and Ser315. Thr329 carries the post-translational modification Phosphothreonine. A Phosphoserine modification is found at Ser331. Lys337 participates in a covalent cross-link: Glycyl lysine isopeptide (Lys-Gly) (interchain with G-Cter in ubiquitin). Residue Ser360 is modified to Phosphoserine. Position 363 is a phosphothreonine (Thr363). The residue at position 366 (Ser366) is a Phosphoserine. A Glycyl lysine isopeptide (Lys-Gly) (interchain with G-Cter in ubiquitin) cross-link involves residue Lys374. Polar residues predominate over residues 379 to 389; that stretch reads QLPTPTSSKNT. The segment at 379 to 406 is disordered; the sequence is QLPTPTSSKNTRIGPFADASYKEGEVEP. Phosphothreonine is present on Thr382. Residues Ser385 and Ser386 each carry the phosphoserine modification. A Glycyl lysine isopeptide (Lys-Gly) (interchain with G-Cter in ubiquitin) cross-link involves residue Lys400. Phosphothreonine occurs at positions 411 and 414. Residue Lys422 forms a Glycyl lysine isopeptide (Lys-Gly) (interchain with G-Cter in ubiquitin) linkage.

It belongs to the G-protein coupled receptor 4 family. Homodimer. Might also for higher order homooligomers such as homotetramers. Oligomerization is mediated significantly by transmembrane domain 1 (TMD1), possibly in concert with the N-terminal extracellular domain and TMD2. Interaction with GPA1, its dedicated G-alpha protein. Post-translationally, undergoes hyperphosphorylation of the C-terminal cytoplasmic domain after binding of the alpha-factor, which leads to internalization by endocytosis. Monoubiquitination at Lys-337 triggers internalization of STE2. In terms of processing, N-glycosylated. N-glycosylation may be involved in the sorting process for misfolded STE2 protein. Expressed in MATa strains but not in MATalpha strains.

The protein resides in the cell membrane. Functionally, fungal class D1 G-protein-coupled receptor that acts as an alpha-factor pheromone receptor performing pheromone-dependent signal transduction involved in cellular conjugation, mating projection assembly, and in cell fusion. Following alpha-factor-binding, the signal is transmitted via a tripartite G protein consisting of alpha-, beta- and gamma-subunits (GAP1, STE4 and STE8 respectively) that prepares the cell for conjugation. In the inactive state, the cytoplasmic end of transmembrane domain 7 (TMD7) is unstructured and packs between TMD1-6, blocking the G protein coupling site. Agonist binding results in the outward movement of the extracellular ends of TMD6 and TMD7 by 6 Angstroms. On the intracellular surface, the G protein coupling site is formed by a 20 Angstroms outward movement of the unstructured region in TMD7 that unblocks the site, and a 12 Angstroms inward movement of TMD6. This chain is Pheromone alpha factor receptor (STE2), found in Saccharomyces cerevisiae (strain ATCC 204508 / S288c) (Baker's yeast).